The sequence spans 214 residues: Cytochrome b (214 aa).

4 helical membrane passes run 31–51 (FGSM…FLAI), 75–96 (WIMQ…YTHI), 111–131 (WLSG…GYVL), and 176–196 (FFAL…IHII). Heme b contacts are provided by His81 and His95. His180 and His194 together coordinate heme b. His199 is an a ubiquinone binding site.

This sequence belongs to the cytochrome b family. As to quaternary structure, the cytochrome bc1 complex contains 3 respiratory subunits (MT-CYB, CYC1 and UQCRFS1), 2 core proteins (UQCRC1 and UQCRC2) and probably 6 low-molecular weight proteins. Heme b is required as a cofactor.

Its subcellular location is the mitochondrion inner membrane. Component of the ubiquinol-cytochrome c reductase complex (complex III or cytochrome b-c1 complex) that is part of the mitochondrial respiratory chain. The b-c1 complex mediates electron transfer from ubiquinol to cytochrome c. Contributes to the generation of a proton gradient across the mitochondrial membrane that is then used for ATP synthesis. The polypeptide is Cytochrome b (MT-CYB) (Cerastes cerastes (Horned desert viper)).